A 117-amino-acid chain; its full sequence is Large ribosomal subunit protein uL18 (117 aa).

The protein belongs to the universal ribosomal protein uL18 family. Part of the 50S ribosomal subunit; part of the 5S rRNA/L5/L18/L25 subcomplex. Contacts the 5S and 23S rRNAs.

In terms of biological role, this is one of the proteins that bind and probably mediate the attachment of the 5S RNA into the large ribosomal subunit, where it forms part of the central protuberance. This chain is Large ribosomal subunit protein uL18, found in Idiomarina loihiensis (strain ATCC BAA-735 / DSM 15497 / L2-TR).